The following is a 251-amino-acid chain: Triosephosphate isomerase (251 aa).

Asparagine 9–lysine 11 provides a ligand contact to substrate. The Electrophile role is filled by histidine 96. The Proton acceptor role is filled by glutamate 167. Substrate is bound by residues glycine 173, serine 213, and glycine 234–glycine 235.

Belongs to the triosephosphate isomerase family. As to quaternary structure, homodimer.

The protein resides in the cytoplasm. It catalyses the reaction D-glyceraldehyde 3-phosphate = dihydroxyacetone phosphate. It participates in carbohydrate biosynthesis; gluconeogenesis. Its pathway is carbohydrate degradation; glycolysis; D-glyceraldehyde 3-phosphate from glycerone phosphate: step 1/1. Its function is as follows. Involved in the gluconeogenesis. Catalyzes stereospecifically the conversion of dihydroxyacetone phosphate (DHAP) to D-glyceraldehyde-3-phosphate (G3P). The protein is Triosephosphate isomerase of Bacteroides fragilis (strain ATCC 25285 / DSM 2151 / CCUG 4856 / JCM 11019 / LMG 10263 / NCTC 9343 / Onslow / VPI 2553 / EN-2).